The primary structure comprises 529 residues: CRISPR-associated endodeoxyribonuclease Cas12f1 (529 aa).

The segment at Met1–Trp95 is zinc finger domain (ZF). Residues Cys50, His53, Cys69, and Cys72 each contribute to the Zn(2+) site. Residues Gln96–Ile192 form a recognition domain (REC) region. Positions Pro193–Lys312 are wedge domain (WED). Positions Ile313–Ile321 are linker. The ruvC-I stretch occupies residues Ile322–Lys473. Active-site residues include Asp326 and Glu422. The interval Thr474–Asn508 is target nucleic acid-binding (TNB). Zn(2+)-binding residues include Cys475 and Cys478. Arg490 is an active-site residue. The Zn(2+) site is built by Cys500 and Cys503. The ruvC-II stretch occupies residues Ala509–Pro529. Asp510 is an active-site residue.

This sequence belongs to the CRISPR-associated endonuclease Cas12f family. In terms of assembly, an asymmetric homodimer. Guide RNA is probably required for dimerization. It depends on Mg(2+) as a cofactor. The cofactor is Zn(2+).

Its activity is regulated as follows. Target ssDNA cleavage is inhibited by EDTA. Activity is maximal with 5-50 mM NaCl, is less efficient at higher NaCl concentrations. CRISPR (clustered regularly interspaced short palindromic repeat), is an adaptive immune system that provides protection against mobile genetic elements (viruses, transposable elements and conjugative plasmids). CRISPR clusters contain sequences complementary to antecedent mobile elements and target invading nucleic acids. CRISPR clusters are transcribed and processed into CRISPR RNA (crRNA), which requires a trans-encoded small RNA (tracrRNA), but not this protein (in vitro). Upon expression in E.coli of this protein, a mini CRISPR array and the probable tracrRNA, the protein associates with both RNAs. The mini system is not active in E.coli against phiX174 phage, nor is it active in protection against transformation by foreign plasmids. In vitro the purified protein-tracrRNA-crRNA complex cleaves ssDNA complementary to the crRNA; target cleavage requires both tracrRNA and crRNA, but not a protospacer adjacent motif (PAM). The tracrRNA-crRNA can be replaced by a single guide RNA (sgRNA). 2-nucleotide mismatches in the middle of the crRNA:DNA heteroduplex decrease cleavage. Cleavage occurs just downstream of the heteroduplex. Activation of this protein results in non-specific ssDNA degradation in vitro. In vitro and in E.coli (coexpressed with sgRNA) has dsDNA endonuclease activity, recognizing the 5' PAM sequence TTTR; both sgRNA and a PAM are required for activity. Cleaves the target strand 24 and the nontarget strand 22 bases upstream of the PAM (respectively), resulting in 5' overhangs. The 2 monomers interact differently with the sgRNA and target DNA. Mutagenesis of a dimeric construct shows that one of the RuvC monomers probably cleaves both DNA strands. In Uncultured archaeon, this protein is CRISPR-associated endodeoxyribonuclease Cas12f1.